We begin with the raw amino-acid sequence, 311 residues long: CID domain-containing protein 1 (311 aa).

In terms of domain architecture, CID spans 1–134 (MSDFTEQTLR…RLQEAHQQMK (134 aa)). Residues 224–256 (MLEDYVKRLKEETKERESLETNLNMLIQNVRMS) adopt a coiled-coil conformation.

This chain is CID domain-containing protein 1 (cids-1), found in Caenorhabditis briggsae.